The following is a 70-amino-acid chain: Cold shock-like protein CspJ (70 aa).

Residues 7–67 enclose the CSD domain; the sequence is GLVKWFNPEK…GPKGPSAVNV (61 aa).

The protein localises to the cytoplasm. The chain is Cold shock-like protein CspJ (cspJ) from Salmonella typhimurium (strain SL1344).